We begin with the raw amino-acid sequence, 174 residues long: MVLLAASGFNLLKVNPGLVIWTLVTFSVVVFVLKKFAWDKILHALEERASGIQGDINKAESLRVEAEKSLKEYKDQLFKATEEAHRIVDEAKKDAVALRTKLTEEAHNEVKGIKDSAVREIELAKGRALSEIQNQIVEMSVLIASEILEKQLKKEDYASFVEKEIAKLDKLKIK.

The helical transmembrane segment at 15–33 (NPGLVIWTLVTFSVVVFVL) threads the bilayer.

Belongs to the ATPase B chain family. As to quaternary structure, F-type ATPases have 2 components, F(1) - the catalytic core - and F(0) - the membrane proton channel. F(1) has five subunits: alpha(3), beta(3), gamma(1), delta(1), epsilon(1). F(0) has three main subunits: a(1), b(2) and c(10-14). The alpha and beta chains form an alternating ring which encloses part of the gamma chain. F(1) is attached to F(0) by a central stalk formed by the gamma and epsilon chains, while a peripheral stalk is formed by the delta and b chains.

It localises to the cell inner membrane. Its function is as follows. F(1)F(0) ATP synthase produces ATP from ADP in the presence of a proton or sodium gradient. F-type ATPases consist of two structural domains, F(1) containing the extramembraneous catalytic core and F(0) containing the membrane proton channel, linked together by a central stalk and a peripheral stalk. During catalysis, ATP synthesis in the catalytic domain of F(1) is coupled via a rotary mechanism of the central stalk subunits to proton translocation. Component of the F(0) channel, it forms part of the peripheral stalk, linking F(1) to F(0). The chain is ATP synthase subunit b from Leptospira biflexa serovar Patoc (strain Patoc 1 / Ames).